The primary structure comprises 84 residues: LYR motif-containing protein 5B (84 aa).

The protein belongs to the complex I LYR family.

In Danio rerio (Zebrafish), this protein is LYR motif-containing protein 5B (lyrm5b).